Here is a 1339-residue protein sequence, read N- to C-terminus: Receptor tyrosine-protein kinase erbB-3 (1339 aa).

The signal sequence occupies residues 1-19 (MRATGTLQVLCFLLSLARG). The Extracellular portion of the chain corresponds to 20 to 643 (SEMGNSQAVC…EVLMSKPHLV (624 aa)). N-linked (GlcNAc...) asparagine glycosylation occurs at N126. 11 disulfides stabilise this stretch: C186-C194, C190-C202, C210-C218, C214-C226, C227-C235, C231-C243, C246-C255, C259-C286, C290-C301, C305-C320, and C323-C327. Residue N250 is glycosylated (N-linked (GlcNAc...) asparagine). N353, N408, N414, N437, and N469 each carry an N-linked (GlcNAc...) asparagine glycan. Intrachain disulfides connect C500/C509, C504/C517, C520/C529, C533/C549, C552/C565, C556/C573, C576/C585, C589/C610, C613/C621, and C617/C629. N522 carries an N-linked (GlcNAc...) asparagine glycan. N566 carries an N-linked (GlcNAc...) asparagine glycan. N-linked (GlcNAc...) asparagine glycosylation is present at N616. The helical transmembrane segment at 644 to 662 (IAVTVGLAVILMILGGSFL) threads the bilayer. The Cytoplasmic segment spans residues 663 to 1339 (YWRGRRIQNK…LFPKANAQRT (677 aa)). Position 684 is a phosphoserine (S684). The region spanning 707-964 (LRKLKVLGSG…TFKELANEFT (258 aa)) is the Protein kinase domain. ATP is bound by residues 713–721 (LGSGVFGTV), K740, 786–788 (QYL), and 832–837 (DLALRN). D832 acts as the Proton acceptor in catalysis. S980 is modified (phosphoserine). The span at 1023–1036 (SLGSALSLPTGTLT) shows a compositional bias: low complexity. 2 disordered regions span residues 1023-1052 (SLGSALSLPTGTLTRPRGSQSLLSPSSGYM) and 1078-1215 (PISL…GSLE). The segment covering 1039 to 1052 (RGSQSLLSPSSGYM) has biased composition (polar residues). Residues 1172–1184 (GTLSSVGLSSVLG) are compositionally biased toward low complexity. The segment covering 1185–1195 (TEEEDEDEEYE) has biased composition (acidic residues).

Belongs to the protein kinase superfamily. Tyr protein kinase family. EGF receptor subfamily. In terms of assembly, monomer and homodimer. Heterodimer with each of the other ERBB receptors (Potential). Interacts with CSPG5, PA2G4, GRB7, MYOC and MUC1. Found in a ternary complex with NRG1 and ITGAV:ITGB3 or ITGA6:ITGB4. In terms of processing, autophosphorylated. Ligand-binding increases phosphorylation on tyrosine residues and promotes its association with the p85 subunit of phosphatidylinositol 3-kinase.

It is found in the membrane. It carries out the reaction L-tyrosyl-[protein] + ATP = O-phospho-L-tyrosyl-[protein] + ADP + H(+). In terms of biological role, tyrosine-protein kinase that plays an essential role as cell surface receptor for neuregulins. Binds to neuregulin-1 (NRG1) and is activated by it; ligand-binding increases phosphorylation on tyrosine residues and promotes its association with the p85 subunit of phosphatidylinositol 3-kinase. May also be activated by CSPG5. Involved in the regulation of myeloid cell differentiation. The polypeptide is Receptor tyrosine-protein kinase erbB-3 (Erbb3) (Rattus norvegicus (Rat)).